The chain runs to 1191 residues: WASH complex subunit homolog 5 (1191 aa).

The protein belongs to the strumpellin family. Component of the WASH complex.

It is found in the early endosome. Functionally, acts at least in part as component of the WASH complex which may regulate wash nucleation-promoting factor (NPF) activity and is required for its membrane targeting during endosomal sorting. During embryogenesis, not involved in the wash-dependent developmental migration of hemocytes anteriorly from the tail. The polypeptide is WASH complex subunit homolog 5 (Drosophila melanogaster (Fruit fly)).